The sequence spans 218 residues: Probable nicotinate-nucleotide adenylyltransferase (218 aa).

Belongs to the NadD family.

The catalysed reaction is nicotinate beta-D-ribonucleotide + ATP + H(+) = deamido-NAD(+) + diphosphate. It participates in cofactor biosynthesis; NAD(+) biosynthesis; deamido-NAD(+) from nicotinate D-ribonucleotide: step 1/1. In terms of biological role, catalyzes the reversible adenylation of nicotinate mononucleotide (NaMN) to nicotinic acid adenine dinucleotide (NaAD). The chain is Probable nicotinate-nucleotide adenylyltransferase from Sodalis glossinidius (strain morsitans).